The chain runs to 1557 residues: Probable kinase PglW (1557 aa).

The NERD domain maps to 12 to 130; sequence SEFEHERRGL…VAEAVCFTDN (119 aa). 2 consecutive Protein kinase domains span residues 195–490 and 530–816; these read ELER…LEVV and WEVR…KVFL. ATP contacts are provided by residues 536 to 544 and Lys564; that span reads LGTGSTSRA. Disordered stretches follow at residues 615 to 634 and 821 to 861; these read DERD…RRRE and TVPS…QRDR. Residues 830 to 849 show a composition bias toward low complexity; the sequence is PAAPADGAAPAEGAAAGIAD.

Belongs to the protein kinase superfamily. Ser/Thr protein kinase family.

Its function is as follows. BREX systems (bacteriophage exclusion) provide immunity against bacteriophage. Part of a type 2 BREX system. Previously called the phage growth limitation (Pgl) system, it confers protection against bacteriophage phiC31. The bacteria allows one cycle of phage infection, but subsequent cycles are impaired, protecting the original bacterial colony. The system undergoes high rates (10(-3) to 10(-4)) of phase reversion, i.e. loss and regain of phiC31 resistance. When the pglW-pglX-pglY-pglZ genes are transformed into a susceptible S.lividans (strain 1326) they confer resistance to infection by phage phiC31 and phiBT1; all 4 genes are necessary. The proteins has kinase domains and might bind DNA. In terms of biological role, autophosphorylates when synthesized in vitro, cannot be expressed in E.coli. This Streptomyces coelicolor (strain ATCC BAA-471 / A3(2) / M145) protein is Probable kinase PglW.